A 241-amino-acid chain; its full sequence is Chloride intracellular channel protein 1 (241 aa).

An N-acetylalanine modification is found at Ala2. Positions 2 to 90 (AEEQPQVELF…EEFLEAVLCP (89 aa)) are required for insertion into the membrane. Lys13 is modified (N6-acetyllysine). The G-site signature appears at 24–27 (CPFS). Cys24 and Cys59 are disulfide-bonded. Residues 26-46 (FSQRLFMVLWLKGVTFNVTTV) form a helical membrane-spanning segment. The region spanning 93–233 (YPKLAALNPE…PDDEEIELAY (141 aa)) is the GST C-terminal domain. N6-acetyllysine is present on Lys119. Position 121 is a phosphoserine (Ser121). Lys131 is modified (N6-acetyllysine). A phosphoserine mark is found at Ser156 and Ser211. At Tyr233 the chain carries Phosphotyrosine.

The protein belongs to the chloride channel CLIC family. As to quaternary structure, monomer. Homodimer (in vitro). Interacts with TRAPPC2. Dimerization requires a conformation change that leads to the exposure of a large hydrophobic surface. In vivo, this may lead to membrane insertion. Expressed in neonatal and adult cardiomyocytes (at protein level).

Its subcellular location is the nucleus. It is found in the nucleus membrane. It localises to the cytoplasm. The protein localises to the cell membrane. The protein resides in the endoplasmic reticulum. The catalysed reaction is L-dehydroascorbate + 2 glutathione = glutathione disulfide + L-ascorbate. It catalyses the reaction chloride(in) = chloride(out). It carries out the reaction iodide(out) = iodide(in). The enzyme catalyses thiocyanate(in) = thiocyanate(out). The catalysed reaction is nitrate(in) = nitrate(out). It catalyses the reaction bromide(in) = bromide(out). It carries out the reaction fluoride(in) = fluoride(out). Its function is as follows. In the soluble state, catalyzes glutaredoxin-like thiol disulfide exchange reactions with reduced glutathione as electron donor. Reduces selenite and dehydroascorbate and may act as an antioxidant during oxidative stress response. Can insert into membranes and form voltage-dependent multi-ion conductive channels. Membrane insertion seems to be redox-regulated and may occur only under oxidizing conditions. Involved in regulation of the cell cycle. The chain is Chloride intracellular channel protein 1 from Rattus norvegicus (Rat).